Here is a 345-residue protein sequence, read N- to C-terminus: AA9 family lytic polysaccharide monooxygenase D (345 aa).

The signal sequence occupies residues 1–21 (MPSFTSKTLLAALAGAAAVNA). Residues His22 and His107 each coordinate Cu(2+). The cysteines at positions 77 and 200 are disulfide-linked. Residue Asn160 is glycosylated (N-linked (GlcNAc...) asparagine). O2 is bound by residues His186 and Gln195. Position 197 (Tyr197) interacts with Cu(2+). Residues 315 to 345 (VQTSTRPISTRPQPTRCPGLGRRHLRKVARA) form a disordered region. A compositionally biased stretch (polar residues) spans 318–327 (STRPISTRPQ). Basic residues predominate over residues 335–345 (GRRHLRKVARA).

This sequence belongs to the polysaccharide monooxygenase AA9 family. The cofactor is Cu(2+).

Its subcellular location is the secreted. The enzyme catalyses [(1-&gt;4)-beta-D-glucosyl]n+m + reduced acceptor + O2 = 4-dehydro-beta-D-glucosyl-[(1-&gt;4)-beta-D-glucosyl]n-1 + [(1-&gt;4)-beta-D-glucosyl]m + acceptor + H2O.. In terms of biological role, lytic polysaccharide monooxygenase (LPMO) that depolymerizes crystalline and amorphous polysaccharides via the oxidation of scissile alpha- or beta-(1-4)-glycosidic bonds, yielding C1 or C4 oxidation products. Catalysis by LPMOs requires the reduction of the active-site copper from Cu(II) to Cu(I) by a reducing agent and H(2)O(2) or O(2) as a cosubstrate. In Podospora anserina (strain S / ATCC MYA-4624 / DSM 980 / FGSC 10383) (Pleurage anserina), this protein is AA9 family lytic polysaccharide monooxygenase D.